Here is a 137-residue protein sequence, read N- to C-terminus: Small ribosomal subunit protein bS6 (137 aa).

The protein belongs to the bacterial ribosomal protein bS6 family.

Functionally, binds together with bS18 to 16S ribosomal RNA. The polypeptide is Small ribosomal subunit protein bS6 (Sulfurimonas denitrificans (strain ATCC 33889 / DSM 1251) (Thiomicrospira denitrificans (strain ATCC 33889 / DSM 1251))).